A 211-amino-acid polypeptide reads, in one-letter code: Orotate phosphoribosyltransferase (211 aa).

5-phospho-alpha-D-ribose 1-diphosphate is bound at residue K26. 34–35 (FF) lines the orotate pocket. Residues 72–73 (YK), R98, K99, K102, H104, and 123–131 (DDVITAGTA) each bind 5-phospho-alpha-D-ribose 1-diphosphate. The orotate site is built by T127 and R155.

The protein belongs to the purine/pyrimidine phosphoribosyltransferase family. PyrE subfamily. Homodimer. Mg(2+) serves as cofactor.

It catalyses the reaction orotidine 5'-phosphate + diphosphate = orotate + 5-phospho-alpha-D-ribose 1-diphosphate. It participates in pyrimidine metabolism; UMP biosynthesis via de novo pathway; UMP from orotate: step 1/2. Catalyzes the transfer of a ribosyl phosphate group from 5-phosphoribose 1-diphosphate to orotate, leading to the formation of orotidine monophosphate (OMP). In Legionella pneumophila (strain Lens), this protein is Orotate phosphoribosyltransferase.